Here is a 372-residue protein sequence, read N- to C-terminus: uncharacterized protein (372 aa).

2 stretches are compositionally biased toward basic residues: residues 1-11 and 38-48; these read MNKILGLRRAK and RLRRGMQRLSR. The disordered stretch occupies residues 1 to 127; the sequence is MNKILGLRRA…NSGTRDTPCW (127 aa). Over residues 50–61 the composition is skewed to basic and acidic residues; the sequence is GYGDNRRSRGSE. Positions 93–104 are enriched in polar residues; the sequence is GKTSPCGSSGTP.

This is an uncharacterized protein from Psittacid herpesvirus 1 (isolate Amazon parrot/-/97-0001/1997) (PsHV-1).